Consider the following 590-residue polypeptide: G protein-coupled receptor kinase 5 (590 aa).

The interval 1–185 is N-terminal; sequence MELENIVANT…LERQPVTKNT (185 aa). Positions 20 to 39 are interaction with calmodulin; the sequence is GGKRKGKSKKWKEILKFPHI. In terms of domain architecture, RGS spans 53–171; it reads YYSLCDKQPI…LDSMYFDRFL (119 aa). S136 is subject to Phosphoserine. In terms of domain architecture, Protein kinase spans 186-448; it reads FRQYRVLGKG…AAEVKRHPFF (263 aa). Residues 192–200 and K215 contribute to the ATP site; that span reads LGKGGFGEV. The Proton acceptor role is filled by D311. The Nuclear localization signal signature appears at 388-395; that stretch reads RKEKVKRE. In terms of domain architecture, AGC-kinase C-terminal spans 449-514; that stretch reads RNMNFKRLEA…GSVPIPWQNE (66 aa). At S484 the chain carries Phosphoserine; by autocatalysis. At T485 the chain carries Phosphothreonine; by autocatalysis. Positions 546 to 565 are sufficient for membrane localization; that stretch reads PKKGLFHRLFRRQHQSNSKS. The tract at residues 557 to 590 is disordered; it reads RQHQSNSKSSPTPKTSCNHRINSNHINSNSTGSS. Low complexity predominate over residues 561 to 590; sequence SNSKSSPTPKTSCNHRINSNHINSNSTGSS. S579 bears the Phosphoserine mark.

This sequence belongs to the protein kinase superfamily. AGC Ser/Thr protein kinase family. GPRK subfamily. In terms of assembly, interacts with ST13 (via the C-terminus 303-319 AA). Interacts with TP53/p53. Interacts with HTR4 (via C-terminus 330-346 AA); this interaction is promoted by 5-HT (serotonin). Interacts with HDAC5. Interacts with GIT1. Autophosphorylated. Autophosphorylation may play a critical role in the regulation of GRK5 kinase activity.

The protein localises to the cytoplasm. It localises to the nucleus. It is found in the cell membrane. The enzyme catalyses [G-protein-coupled receptor] + ATP = [G-protein-coupled receptor]-phosphate + ADP + H(+). Inhibited by calmodulin with an IC(50) of 50 nM. Calmodulin inhibits GRK5 association with receptor and phospholipid. Serine/threonine kinase that phosphorylates preferentially the activated forms of a variety of G-protein-coupled receptors (GPCRs). Such receptor phosphorylation initiates beta-arrestin-mediated receptor desensitization, internalization, and signaling events leading to their down-regulation. Phosphorylates a variety of GPCRs, including adrenergic receptors, muscarinic acetylcholine receptors (more specifically Gi-coupled M2/M4 subtypes), dopamine receptors and opioid receptors. In addition to GPCRs, also phosphorylates various substrates: Hsc70-interacting protein/ST13, TP53/p53, HDAC5, and arrestin-1/ARRB1. Phosphorylation of ARRB1 by GRK5 inhibits G-protein independent MAPK1/MAPK3 signaling downstream of 5HT4-receptors. Phosphorylation of HDAC5, a repressor of myocyte enhancer factor 2 (MEF2) leading to nuclear export of HDAC5 and allowing MEF2-mediated transcription. Phosphorylation of TP53/p53, a crucial tumor suppressor, inhibits TP53/p53-mediated apoptosis. Phosphorylation of ST13 regulates internalization of the chemokine receptor. Phosphorylates rhodopsin (RHO) (in vitro) and a non G-protein-coupled receptor, LRP6 during Wnt signaling (in vitro). This chain is G protein-coupled receptor kinase 5 (Grk5), found in Mus musculus (Mouse).